Reading from the N-terminus, the 514-residue chain is Serine/threonine-protein kinase 33 (514 aa).

Over residues 65 to 86 (INRDITSRKDLPSRTSNVERKA) the composition is skewed to basic and acidic residues. Positions 65-91 (INRDITSRKDLPSRTSNVERKASQQQW) are disordered. The 266-residue stretch at 116–381 (YTFGRILGKG…AKELLDNQWL (266 aa)) folds into the Protein kinase domain. Residues 122 to 130 (LGKGSFGIV) and Lys145 each bind ATP. Asp238 functions as the Proton acceptor in the catalytic mechanism. Disordered stretches follow at residues 402–468 (KNNP…DMCS) and 485–514 (MEKTPVTPSQGTATKYPAKSGALSRTKKKL). Ser407 carries the phosphoserine modification. Residues 413–426 (TEEKNKPSTEEKLK) show a composition bias toward basic and acidic residues. Polar residues predominate over residues 449–468 (STAYEKQFPATSKDNFDMCS).

The protein belongs to the protein kinase superfamily. CAMK Ser/Thr protein kinase family. CaMK subfamily. In terms of assembly, homodimer. Post-translationally, autophosphorylated. In terms of tissue distribution, highly expressed in testis, fetal lung and heart, followed by pituitary gland, kidney, interventricular septum, pancreas, heart, trachea, thyroid gland and uterus. Weak hybridization signals were observed in the following tissues: amygdala, aorta, esophagus, colon ascending, colon transverse, skeletal muscle, spleen, peripheral blood leukocyte, lymph node, bone marrow, placenta, prostate, liver, salivary gland, mammary gland, some tumor cell lines, fetal brain, fetal liver, fetal spleen and fetal thymus. No signal at all was detectable in RNA from tissues of the nervous system.

The protein localises to the cytoplasm. The protein resides in the cytoskeleton. It localises to the perinuclear region. It catalyses the reaction L-seryl-[protein] + ATP = O-phospho-L-seryl-[protein] + ADP + H(+). The enzyme catalyses L-threonyl-[protein] + ATP = O-phospho-L-threonyl-[protein] + ADP + H(+). Its activity is regulated as follows. Specifically inhibited by CDD-2807 ((3-([1,1'-Biphenyl]-2-ylethynyl)-1H-indazol-5-yl)(2,6-diazaspiro[3.5]nonan-2-yl)methanone). In terms of biological role, serine/threonine protein kinase required for spermatid differentiation and male fertility. Promotes sperm flagella assembly during spermatogenesis by mediating phosphorylation of fibrous sheath proteins AKAP3 and AKAP4. Also phosphorylates vimentin/VIM, thereby regulating the dynamic behavior of the intermediate filament cytoskeleton. This chain is Serine/threonine-protein kinase 33, found in Homo sapiens (Human).